A 161-amino-acid polypeptide reads, in one-letter code: Protein UXT homolog (161 aa).

It belongs to the UXT family.

This Dictyostelium discoideum (Social amoeba) protein is Protein UXT homolog.